Here is a 319-residue protein sequence, read N- to C-terminus: MRKNEYVNLPVICLVGPTASGKSGLAVRVCRRLYVDEHPAEIINTDSMVVYRGMDIGTATPTLREQRTVVHHLVSILDVTVPSSLVLMQTLARDAVEDCLSRGVIPVLVGGSALYTKAIIDEMSIPPTDPEVRARWQEKLDAEGPRVLHDELARRDPKAAESILPGNGRRIVRALEVIDLTGSFTATIPDGTLHWPKTVQMGLELSRKDIDQRIADRVDQMWAYGFVDEVRSLANVGLREGLTASRALGYRQVLEYLNGDYDEDEARRRTIIGTRRFARKQLMWYRRDDRIEWFNALAPDLDDRVVARVLTALTTDEED.

ATP is bound at residue 16–23 (GPTASGKS). 18-23 (TASGKS) contacts substrate. The interaction with substrate tRNA stretch occupies residues 46–49 (DSMV).

It belongs to the IPP transferase family. In terms of assembly, monomer. It depends on Mg(2+) as a cofactor.

The enzyme catalyses adenosine(37) in tRNA + dimethylallyl diphosphate = N(6)-dimethylallyladenosine(37) in tRNA + diphosphate. Its function is as follows. Catalyzes the transfer of a dimethylallyl group onto the adenine at position 37 in tRNAs that read codons beginning with uridine, leading to the formation of N6-(dimethylallyl)adenosine (i(6)A). This is tRNA dimethylallyltransferase from Cutibacterium acnes (strain DSM 16379 / KPA171202) (Propionibacterium acnes).